Consider the following 177-residue polypeptide: Bifunctional protein PyrR (177 aa).

Positions 101-113 (IILIDDVLYTGRT) match the PRPP-binding motif.

The protein belongs to the purine/pyrimidine phosphoribosyltransferase family. PyrR subfamily.

It catalyses the reaction UMP + diphosphate = 5-phospho-alpha-D-ribose 1-diphosphate + uracil. Functionally, regulates the transcription of the pyrimidine nucleotide (pyr) operon in response to exogenous pyrimidines. Also displays a weak uracil phosphoribosyltransferase activity which is not physiologically significant. The polypeptide is Bifunctional protein PyrR (Endomicrobium trichonymphae).